The following is a 199-amino-acid chain: Golgi to ER traffic protein 1 (199 aa).

Over 1-11 (MLLPDLHPYTI) the chain is Lumenal. The helical transmembrane segment at 12–31 (LLSIFLVLVVKQLVATIGKS) threads the bilayer. Residues 32 to 115 (TIQEFVWLVY…SIDKASNALI (84 aa)) lie on the Cytoplasmic side of the membrane. Residues 76–116 (YAKWTKLNRQADKLSAELQKLNQEIQQQKSSIDKASNALIL) are a coiled coil. A helical membrane pass occupies residues 116–136 (LVLTTLPIWIARVFYRKTHLF). At 137 to 160 (YIRQGIFPKYVEWVLALPFLPNGA) the chain is on the lumenal side. Residues 161-177 (VGLTIWMFAVNSVVSNF) traverse the membrane as a helical segment. The Cytoplasmic segment spans residues 178–199 (SFLVSFPFAKRVSKPVRDTKVE).

It belongs to the WRB/GET1 family. In terms of assembly, component of the Golgi to ER traffic (GET) complex, which is composed of GET1, GET2 and GET3. Within the complex, GET1 and GET2 form a heterotetramer which is stabilized by phosphatidylinositol binding and which binds to the GET3 homodimer.

It is found in the endoplasmic reticulum membrane. The protein localises to the golgi apparatus membrane. In terms of biological role, required for the post-translational delivery of tail-anchored (TA) proteins to the endoplasmic reticulum. Together with GET2, acts as a membrane receptor for soluble GET3, which recognizes and selectively binds the transmembrane domain of TA proteins in the cytosol. The GET complex cooperates with the HDEL receptor ERD2 to mediate the ATP-dependent retrieval of resident ER proteins that contain a C-terminal H-D-E-L retention signal from the Golgi to the ER. This chain is Golgi to ER traffic protein 1, found in Candida albicans (strain WO-1) (Yeast).